A 1008-amino-acid polypeptide reads, in one-letter code: Phytosulfokine receptor 1 (1008 aa).

A signal peptide spans 1–25 (MRVHRFCVIVIFLTELLCFFYSSES). N-linked (GlcNAc...) asparagine glycosylation is found at Asn-55, Asn-64, and Asn-73. 12 LRR repeats span residues 75–98 (TGRV…SLGK), 99–123 (LDEI…IFNL), 124–148 (KNLQ…NLPA), 150–170 (QSFD…ICHN), 172–194 (TQIR…GFGK), 195–219 (CVLL…LFHL), 221–243 (RLNL…IRNL), 244–266 (SSLV…VFDE), 291–315 (SPSL…CTAM), 316–339 (IALN…LPDC), 341–362 (RLKN…SFKN), and 363–387 (FESL…GILQ). Asn-106 carries an N-linked (GlcNAc...) asparagine glycan. Asn-160, Asn-170, and Asn-187 each carry an N-linked (GlcNAc...) asparagine glycan. Asn-242 carries an N-linked (GlcNAc...) asparagine glycan. Arg-300 serves as a coordination point for phytosulfokine. N-linked (GlcNAc...) asparagine glycosylation is found at Asn-301 and Asn-311. Residues Asn-346, Ser-370, and Ser-372 each contribute to the phytosulfokine site. 3 N-linked (GlcNAc...) asparagine glycosylation sites follow: Asn-373, Asn-378, and Asn-391. LRR repeat units lie at residues 392-414 (LTTL…SLHF), 415-438 (EKLK…LSSS), 439-464 (NELQ…DFKA), and 466-486 (FYLD…LTKL). The phytosulfokine site is built by Thr-398, Asn-424, and Asp-445. Residues Asn-472 and Asn-493 are each glycosylated (N-linked (GlcNAc...) asparagine). Position 508 (Lys-508) interacts with phytosulfokine. N-linked (GlcNAc...) asparagine glycans are attached at residues Asn-510 and Asn-534. 4 LRR repeats span residues 521–545 (IFGF…EFGN), 546–570 (LKKL…LSGM), 571–594 (TSLE…LQQL), and 596–619 (FLSK…QFQT). N-linked (GlcNAc...) asparagine glycans are attached at residues Asn-606 and Asn-622. The chain crosses the membrane as a helical span at residues 660–680 (MAIGIAFGSVFLLTLLSLIVL). The residue at position 731 (Thr-731) is a Phosphothreonine. The 272-residue stretch at 734 to 1005 (FDQANIIGCG…PTTQQLVSWL (272 aa)) folds into the Protein kinase domain. Residues 740–748 (IGCGGFGMV) and Lys-762 contribute to the ATP site. Phosphotyrosine is present on residues Tyr-807 and Tyr-847. Asp-860 (proton acceptor) is an active-site residue. The residue at position 902 (Tyr-902) is a Phosphotyrosine.

Belongs to the protein kinase superfamily. Ser/Thr protein kinase family. As to quaternary structure, homo- and heterodimers with PSY1R. Heterodimers with the somatic embryogenesis receptor-like kinases (SERKs). PSK is not directly involved in PSKR-SERK interaction but stabilizes PSKR island domain for recruitment of a SERK. Part of a functional complex containing PSKR1, BAK1, CNGC17, and AHA. Interacts with AHA1, AHA2, and BAK1, but not with CNGC17 or BRI1. Requires Mg(2+) as cofactor. It depends on Mn(2+) as a cofactor. As to expression, weakly expressed in roots, leaves, stems and flowers. Expressed in the primary and lateral roots, including root primordia and root tips, but not in the hypocotyl.

It localises to the cell membrane. The enzyme catalyses L-seryl-[protein] + ATP = O-phospho-L-seryl-[protein] + ADP + H(+). It carries out the reaction L-threonyl-[protein] + ATP = O-phospho-L-threonyl-[protein] + ADP + H(+). The catalysed reaction is GTP = 3',5'-cyclic GMP + diphosphate. CGMP suppresses kinase activity. Phytosulfokine receptor with both a serine/threonine-protein kinase activity and a guanylate cyclase activity. Regulates, in response to phytosulfokine binding, a signaling cascade involved in plant cell differentiation, organogenesis, somatic embryogenesis, cellular proliferation and plant growth. Involved in plant immunity, with antagonistic effects on bacterial and fungal resistances. Not involved in PSY perception. CNGC17 and AHAs form a functional cation-translocating unit that is activated by PSKR1/BAK1 and possibly other BAK1/RLK complexes. This chain is Phytosulfokine receptor 1, found in Arabidopsis thaliana (Mouse-ear cress).